A 300-amino-acid polypeptide reads, in one-letter code: Phosphoenolpyruvate phosphomutase (300 aa).

Positions 1-10 are excised as a propeptide; the sequence is MLANSLKSFF. Asp-66 acts as the Nucleophile in catalysis.

This sequence belongs to the isocitrate lyase/PEP mutase superfamily. PEP mutase family.

It carries out the reaction phosphoenolpyruvate + H(+) = 3-phosphonopyruvate. It participates in phosphorus metabolism; phosphonate biosynthesis. Its function is as follows. Formation of a carbon-phosphorus bond by converting phosphoenolpyruvate (PEP) to phosphonopyruvate (P-Pyr). This Tetrahymena pyriformis protein is Phosphoenolpyruvate phosphomutase (PEPM).